The primary structure comprises 337 residues: Holliday junction branch migration complex subunit RuvB (337 aa).

The large ATPase domain (RuvB-L) stretch occupies residues 4-184; it reads ADRLIAPAAI…FGIVQRLEFY (181 aa). Residues Ile-23, Arg-24, Gly-65, Lys-68, Thr-69, Thr-70, 131-133, Arg-174, Tyr-184, and Arg-221 each bind ATP; that span reads EDY. A Mg(2+)-binding site is contributed by Thr-69. The interval 185 to 255 is small ATPAse domain (RuvB-S); sequence KVEDLAHIVG…IAAQALDMLD (71 aa). Residues 258–337 are head domain (RuvB-H); that stretch reads NAGFDYMDRK…FGLTTPERQG (80 aa). Residues Arg-313 and Arg-318 each coordinate DNA.

The protein belongs to the RuvB family. Homohexamer. Forms an RuvA(8)-RuvB(12)-Holliday junction (HJ) complex. HJ DNA is sandwiched between 2 RuvA tetramers; dsDNA enters through RuvA and exits via RuvB. An RuvB hexamer assembles on each DNA strand where it exits the tetramer. Each RuvB hexamer is contacted by two RuvA subunits (via domain III) on 2 adjacent RuvB subunits; this complex drives branch migration. In the full resolvosome a probable DNA-RuvA(4)-RuvB(12)-RuvC(2) complex forms which resolves the HJ.

It is found in the cytoplasm. The enzyme catalyses ATP + H2O = ADP + phosphate + H(+). Its function is as follows. The RuvA-RuvB-RuvC complex processes Holliday junction (HJ) DNA during genetic recombination and DNA repair, while the RuvA-RuvB complex plays an important role in the rescue of blocked DNA replication forks via replication fork reversal (RFR). RuvA specifically binds to HJ cruciform DNA, conferring on it an open structure. The RuvB hexamer acts as an ATP-dependent pump, pulling dsDNA into and through the RuvAB complex. RuvB forms 2 homohexamers on either side of HJ DNA bound by 1 or 2 RuvA tetramers; 4 subunits per hexamer contact DNA at a time. Coordinated motions by a converter formed by DNA-disengaged RuvB subunits stimulates ATP hydrolysis and nucleotide exchange. Immobilization of the converter enables RuvB to convert the ATP-contained energy into a lever motion, pulling 2 nucleotides of DNA out of the RuvA tetramer per ATP hydrolyzed, thus driving DNA branch migration. The RuvB motors rotate together with the DNA substrate, which together with the progressing nucleotide cycle form the mechanistic basis for DNA recombination by continuous HJ branch migration. Branch migration allows RuvC to scan DNA until it finds its consensus sequence, where it cleaves and resolves cruciform DNA. The sequence is that of Holliday junction branch migration complex subunit RuvB from Tolumonas auensis (strain DSM 9187 / NBRC 110442 / TA 4).